The primary structure comprises 61 residues: Large ribosomal subunit protein uL30 (61 aa).

This sequence belongs to the universal ribosomal protein uL30 family. In terms of assembly, part of the 50S ribosomal subunit.

The chain is Large ribosomal subunit protein uL30 from Corynebacterium efficiens (strain DSM 44549 / YS-314 / AJ 12310 / JCM 11189 / NBRC 100395).